A 674-amino-acid chain; its full sequence is DNA ligase (674 aa).

Residues 42 to 46 (DNVYD), 91 to 92 (SM), and glutamate 121 each bind NAD(+). Lysine 123 acts as the N6-AMP-lysine intermediate in catalysis. Positions 144, 178, 294, and 318 each coordinate NAD(+). The Zn(2+) site is built by cysteine 412, cysteine 415, cysteine 430, and cysteine 435. Residues 596-674 (VKDSFVAGKT…ETELLANLKD (79 aa)) form the BRCT domain.

This sequence belongs to the NAD-dependent DNA ligase family. LigA subfamily. The cofactor is Mg(2+). It depends on Mn(2+) as a cofactor.

It catalyses the reaction NAD(+) + (deoxyribonucleotide)n-3'-hydroxyl + 5'-phospho-(deoxyribonucleotide)m = (deoxyribonucleotide)n+m + AMP + beta-nicotinamide D-nucleotide.. In terms of biological role, DNA ligase that catalyzes the formation of phosphodiester linkages between 5'-phosphoryl and 3'-hydroxyl groups in double-stranded DNA using NAD as a coenzyme and as the energy source for the reaction. It is essential for DNA replication and repair of damaged DNA. The polypeptide is DNA ligase (Lacticaseibacillus casei (strain BL23) (Lactobacillus casei)).